We begin with the raw amino-acid sequence, 426 residues long: 5-methylthioadenosine/S-adenosylhomocysteine deaminase (426 aa).

The Zn(2+) site is built by H60 and H62. Substrate contacts are provided by E89 and H179. Zn(2+) is bound at residue H206. Substrate contacts are provided by E209 and D294. Residue D294 participates in Zn(2+) binding.

It belongs to the metallo-dependent hydrolases superfamily. MTA/SAH deaminase family. Requires Zn(2+) as cofactor.

The catalysed reaction is S-adenosyl-L-homocysteine + H2O + H(+) = S-inosyl-L-homocysteine + NH4(+). The enzyme catalyses S-methyl-5'-thioadenosine + H2O + H(+) = S-methyl-5'-thioinosine + NH4(+). Functionally, catalyzes the deamination of 5-methylthioadenosine and S-adenosyl-L-homocysteine into 5-methylthioinosine and S-inosyl-L-homocysteine, respectively. Is also able to deaminate adenosine. This is 5-methylthioadenosine/S-adenosylhomocysteine deaminase from Dictyoglomus thermophilum (strain ATCC 35947 / DSM 3960 / H-6-12).